A 1008-amino-acid polypeptide reads, in one-letter code: Pheromone-regulated membrane protein 10 (1008 aa).

Disordered regions lie at residues 1–273, 342–384, and 477–506; these read MSQS…TFLG, KLPE…FYTP, and KNDF…TQDE. The segment covering 70-85 has biased composition (low complexity); sequence DTIISNASTTNNSSSD. Residues 95-111 are compositionally biased toward polar residues; that stretch reads GENSNLPNFNFSANQVH. Acidic residues-rich tracts occupy residues 116 to 132 and 143 to 161; these read ANED…EDTF and GSDE…EDKE. Residues 162 to 186 show a composition bias toward basic and acidic residues; the sequence is EVVNEKEEIADDLHSKSSKTSRESK. The span at 188–204 shows a compositional bias: polar residues; the sequence is FNAGTKNSRRSLNSLQR. Residues 205 to 214 are compositionally biased toward basic and acidic residues; sequence NETDVTDQLK. A compositionally biased stretch (low complexity) spans 215–225; the sequence is RTTSTTSSSKR. The span at 226-239 shows a compositional bias: basic and acidic residues; it reads SNSDKRTGFKDILR. Residues 346-364 show a composition bias toward polar residues; sequence GTSSDQQLDYSDTSASNLI. The span at 483-498 shows a compositional bias: basic residues; it reads GPKRMANKIPGRKHGA. 10 consecutive transmembrane segments (helical) span residues 683 to 703, 707 to 727, 736 to 756, 762 to 782, 800 to 820, 838 to 858, 866 to 886, 892 to 912, 917 to 937, and 978 to 998; these read SPWL…PFAF, WYDV…QFFV, SVFE…IGSI, FCFS…YIIL, MFYA…GASL, IKQD…LGLI, LPIM…AGKH, VTEF…NLYS, GMAV…GIAS, and VKVS…VYPF.

It belongs to the ThrE exporter (TC 2.A.79) family.

The protein resides in the membrane. This chain is Pheromone-regulated membrane protein 10, found in Debaryomyces hansenii (strain ATCC 36239 / CBS 767 / BCRC 21394 / JCM 1990 / NBRC 0083 / IGC 2968) (Yeast).